Consider the following 185-residue polypeptide: Putative RNA (cytidine(34)-2'-O)-methyltransferase (185 aa).

The S-adenosyl-L-methionine site is built by isoleucine 80, glycine 105, and isoleucine 126.

It belongs to the class IV-like SAM-binding methyltransferase superfamily. RNA methyltransferase TrmH family. TrmL subfamily.

The protein localises to the cytoplasm. The catalysed reaction is cytidine(34) in tRNA + S-adenosyl-L-methionine = 2'-O-methylcytidine(34) in tRNA + S-adenosyl-L-homocysteine + H(+). It carries out the reaction 5-carboxymethylaminomethyluridine(34) in tRNA(Leu) + S-adenosyl-L-methionine = 5-carboxymethylaminomethyl-2'-O-methyluridine(34) in tRNA(Leu) + S-adenosyl-L-homocysteine + H(+). Functionally, could methylate the ribose at the nucleotide 34 wobble position in tRNA. The protein is Putative RNA (cytidine(34)-2'-O)-methyltransferase of Lactobacillus gasseri (strain ATCC 33323 / DSM 20243 / BCRC 14619 / CIP 102991 / JCM 1131 / KCTC 3163 / NCIMB 11718 / NCTC 13722 / AM63).